A 175-amino-acid chain; its full sequence is NADH-quinone oxidoreductase subunit I (175 aa).

4Fe-4S ferredoxin-type domains are found at residues Lys-69–Gly-98 and Lys-115–Pro-144. Residues Cys-78, Cys-81, Cys-84, Cys-88, Cys-124, Cys-127, Cys-130, and Cys-134 each coordinate [4Fe-4S] cluster.

This sequence belongs to the complex I 23 kDa subunit family. In terms of assembly, NDH-1 is composed of 14 different subunits. Subunits NuoA, H, J, K, L, M, N constitute the membrane sector of the complex. [4Fe-4S] cluster serves as cofactor.

It is found in the cell inner membrane. The catalysed reaction is a quinone + NADH + 5 H(+)(in) = a quinol + NAD(+) + 4 H(+)(out). NDH-1 shuttles electrons from NADH, via FMN and iron-sulfur (Fe-S) centers, to quinones in the respiratory chain. The immediate electron acceptor for the enzyme in this species is believed to be ubiquinone. Couples the redox reaction to proton translocation (for every two electrons transferred, four hydrogen ions are translocated across the cytoplasmic membrane), and thus conserves the redox energy in a proton gradient. This is NADH-quinone oxidoreductase subunit I from Leptospira borgpetersenii serovar Hardjo-bovis (strain JB197).